Reading from the N-terminus, the 111-residue chain is Phosphoribosyl-ATP pyrophosphatase (111 aa).

It belongs to the PRA-PH family.

Its subcellular location is the cytoplasm. The enzyme catalyses 1-(5-phospho-beta-D-ribosyl)-ATP + H2O = 1-(5-phospho-beta-D-ribosyl)-5'-AMP + diphosphate + H(+). The protein operates within amino-acid biosynthesis; L-histidine biosynthesis; L-histidine from 5-phospho-alpha-D-ribose 1-diphosphate: step 2/9. The polypeptide is Phosphoribosyl-ATP pyrophosphatase (Pseudomonas entomophila (strain L48)).